The chain runs to 419 residues: POU domain, class 4, transcription factor 1 (419 aa).

The POU-IV box motif lies at 57-66 (RAEALAAVDI). 2 disordered regions span residues 94 to 117 (STVPLAHHHHHHHHHQALEPGDLL) and 131 to 197 (AGGA…HSLG). Positions 99–108 (AHHHHHHHHH) are enriched in basic residues. The segment covering 131 to 184 (AGGAGAAAGGGGAHDGPGGGGGPGGGGGPGGGPGGGGGGGPGGGGGGPGGGLLG) has biased composition (gly residues). One can recognise a POU-specific domain in the interval 261–338 (SDTDPRELEA…LQAWLEEAEG (78 aa)). A DNA-binding region (homeobox) is located at residues 356–415 (KRKRTSIAAPEKRSLEAYFAVQPRPSSEKIAAIAEKLDLKKNVVRVWFCNQRQKQKRMKF).

The protein belongs to the POU transcription factor family. Class-4 subfamily. As to quaternary structure, interacts (via N-terminus) with RIT2; the interaction controls POU4F1 transactivation activity on some neuronal target genes. Isoform 1 interacts with POU4F2; this interaction inhibits both POU4F1 DNA-binding and transcriptional activities. Isoform 1 interacts (C-terminus) with ESR1 (via DNA-binding domain); this interaction decreases the estrogen receptor ESR1 transcriptional activity in a DNA- and ligand 17-beta-estradiol-independent manner. Expressed in the brain and the retina. Present in the developing brain, spinal cord and eye.

The protein resides in the nucleus. It localises to the cytoplasm. Its function is as follows. Multifunctional transcription factor with different regions mediating its different effects. Acts by binding (via its C-terminal domain) to sequences related to the consensus octamer motif 5'-ATGCAAAT-3' in the regulatory regions of its target genes. Regulates the expression of specific genes involved in differentiation and survival within a subset of neuronal lineages. It has been shown that activation of some of these genes requires its N-terminal domain, maybe through a neuronal-specific cofactor. Activates BCL2 expression and protects neuronal cells from apoptosis (via the N-terminal domain). Induces neuronal process outgrowth and the coordinate expression of genes encoding synaptic proteins. Exerts its major developmental effects in somatosensory neurons and in brainstem nuclei involved in motor control. Stimulates the binding affinity of the nuclear estrogene receptor ESR1 to DNA estrogen response element (ERE), and hence modulates ESR1-induced transcriptional activity. May positively regulate POU4F2 and POU4F3. Regulates dorsal root ganglion sensory neuron specification and axonal projection into the spinal cord. Plays a role in TNFSF11-mediated terminal osteoclast differentiation. Negatively regulates its own expression interacting directly with a highly conserved autoregulatory domain surrounding the transcription initiation site. Able to act as transcription factor, cannot regulate the expression of the same subset of genes than isoform 1. Does not have antiapoptotic effect on neuronal cells. The polypeptide is POU domain, class 4, transcription factor 1 (Homo sapiens (Human)).